Reading from the N-terminus, the 237-residue chain is Putative N-acetylmannosamine-6-phosphate 2-epimerase (237 aa).

Belongs to the NanE family.

The catalysed reaction is an N-acyl-D-glucosamine 6-phosphate = an N-acyl-D-mannosamine 6-phosphate. It functions in the pathway amino-sugar metabolism; N-acetylneuraminate degradation; D-fructose 6-phosphate from N-acetylneuraminate: step 3/5. Its function is as follows. Converts N-acetylmannosamine-6-phosphate (ManNAc-6-P) to N-acetylglucosamine-6-phosphate (GlcNAc-6-P). This is Putative N-acetylmannosamine-6-phosphate 2-epimerase from Caldanaerobacter subterraneus subsp. tengcongensis (strain DSM 15242 / JCM 11007 / NBRC 100824 / MB4) (Thermoanaerobacter tengcongensis).